The following is a 438-amino-acid chain: Coenzyme A disulfide reductase (438 aa).

8-33 is a binding site for FAD; it reads GAVAGGATCASQIRRLDKESDIIIFE. Substrate-binding residues include Thr-15, Gln-19, Arg-22, Ser-39, and Asn-42. Residue Cys-43 is the Nucleophile of the active site. Cys-43 (redox-active) is an active-site residue. Lys-71 contacts substrate. An NADP(+)-binding site is contributed by 151-166; that stretch reads VLVIGAGYVSLEVLEN. 267–277 is a binding site for FAD; it reads TNVPNIYAIGD. Position 299 (His-299) interacts with substrate. Position 419 (Tyr-419) interacts with FAD. Lys-427 provides a ligand contact to substrate.

This sequence belongs to the class-III pyridine nucleotide-disulfide oxidoreductase family. In terms of assembly, homodimer. It depends on FAD as a cofactor.

The catalysed reaction is NADP(+) + 2 CoA = CoA-disulfide + NADPH + H(+). Functionally, catalyzes specifically the NADPH-dependent reduction of coenzyme A disulfide. This is Coenzyme A disulfide reductase from Staphylococcus aureus (strain Mu3 / ATCC 700698).